The chain runs to 155 residues: MNVTFDLTPPSPSQREALIATLNAEERRILLQHGTEAPFCNRLLDNNQLGTYTCRLCGLPLFHSNAKFKSGTGWPSFFEPYTHTHIRKQHDTSHGMIRTEILCARCNSHLGHLFPDGPPPTYERYCLNSVSLTFIPTGTLLPDQLHRGDNTTYRT.

The region spanning 15-137 (REALIATLNA…NSVSLTFIPT (123 aa)) is the MsrB domain. Zn(2+)-binding residues include Cys-54, Cys-57, Cys-103, and Cys-106. Catalysis depends on Cys-126, which acts as the Nucleophile.

This sequence belongs to the MsrB Met sulfoxide reductase family. Requires Zn(2+) as cofactor.

It catalyses the reaction L-methionyl-[protein] + [thioredoxin]-disulfide + H2O = L-methionyl-(R)-S-oxide-[protein] + [thioredoxin]-dithiol. The polypeptide is Peptide methionine sulfoxide reductase MsrB (Xylella fastidiosa (strain M23)).